Consider the following 382-residue polypeptide: Alkanesulfonate monooxygenase (382 aa).

The protein belongs to the SsuD family. As to quaternary structure, homotetramer.

It carries out the reaction an alkanesulfonate + FMNH2 + O2 = an aldehyde + FMN + sulfite + H2O + 2 H(+). Catalyzes the desulfonation of aliphatic sulfonates. In Serratia proteamaculans (strain 568), this protein is Alkanesulfonate monooxygenase.